A 448-amino-acid chain; its full sequence is MLSCVFSDTIFLSSFLAVTLICMTTALWGTILLISKQPLLSESLSHASYPGLLVGALMAQYVFSLQASIFWIVLFGCAASVFGYGIIVFLGKVCKLHKDSALCFVLVVFFAIGVILASYVKESSPTLYNRINAYLYGQAATLGFLEATLAAIVFCASLFALWWWYRQIVVTTFDKDFAVTCGLKTVLYEALSLIFISLVIVSGVRSVGIVLISAMFVAPSLGARQLSDRLSTILILSAFFGGISGALGSYISVAFTCRAIIGQQAVPVTLPTGPLVVICAGLLAGLCLLFSPKSGWVIRFVRRKHFSFSKDQEHLLKVFWHISHNRLENISVRDFVCSYKYQEYFGPKPFPRWRVQILEWRGYVKKEQDYYRLTKKGRSEALRLVRAHRLWESYLVNSLDFSKESVHELAEEIEHVLTEELDHTLTEILNDPCYDPHRQIIPNKKKEV.

8 helical membrane-spanning segments follow: residues 15-35 (FLAV…LLIS), 47-67 (ASYP…SLQA), 69-89 (IFWI…IIVF), 100-120 (SALC…ASYV), 144-164 (FLEA…LWWW), 193-213 (LIFI…VLIS), 233-253 (ILIL…YISV), and 270-290 (LPTG…CLLF).

This sequence belongs to the ABC-3 integral membrane protein family.

Its subcellular location is the cell inner membrane. Functionally, part of an ATP-driven transport system CPn_0346/CPn_0347/CPn_0348/CPn_0349 for a metal. The polypeptide is Probable metal transport system membrane protein CPn_0347/CP_0413/CPj0347/CpB0354 (Chlamydia pneumoniae (Chlamydophila pneumoniae)).